Here is a 304-residue protein sequence, read N- to C-terminus: Coenzyme PQQ synthesis protein B (304 aa).

The protein belongs to the PqqB family.

It participates in cofactor biosynthesis; pyrroloquinoline quinone biosynthesis. Functionally, may be involved in the transport of PQQ or its precursor to the periplasm. This Pseudomonas aeruginosa (strain UCBPP-PA14) protein is Coenzyme PQQ synthesis protein B.